The primary structure comprises 5061 residues: E3 ubiquitin-protein ligase rnf213-beta (5061 aa).

Over residues 1-12 (MTRKRKSGKKGK) the composition is skewed to basic residues. The segment at 1–334 (MTRKRKSGKK…QRKPSPVRAP (334 aa)) is disordered. Composition is skewed to polar residues over residues 24–52 (GGST…TQKD) and 75–87 (SDGS…TNKE). Residues 100–110 (LQKKGPQKRKG) show a composition bias toward basic residues. Composition is skewed to polar residues over residues 127-163 (QTSY…TSAS) and 172-200 (TETV…QPPQ). Basic and acidic residues-rich tracts occupy residues 217–229 (KGSE…EESV) and 236–289 (LSEI…EEPK). Residues 292–301 (AAAAATGKTG) show a composition bias toward low complexity. Positions 306-322 (EQTNQIEANQDSTMESK) are enriched in polar residues. ATP-binding positions include 1923–1928 (AVGKSL), Glu-2023, Asp-2074, Lys-2417, and Ser-2492. Residues Cys-3957, Cys-3960, Cys-3972, His-3974, Cys-3977, Cys-3980, Cys-3993, Cys-3996, Cys-4451, and His-4455 each coordinate Zn(2+). Residues 3957–3997 (CRVCLMELSEPFALPCEHVFCRSCLRRSMEREEAQHCPVCR) form an RING-type zinc finger. An RZ-type zinc finger spans residues 4429–4501 (MPDDHTSEAK…AYGDYDRTRP (73 aa)). The Nucleophile; for E3 ubiquitin-lipopolysaccharide ligase activity role is filled by Cys-4462. The Zn(2+) site is built by Cys-4471 and Cys-4474.

Belongs to the AAA ATPase family.

It is found in the cytoplasm. Its subcellular location is the cytosol. It localises to the lipid droplet. The catalysed reaction is S-ubiquitinyl-[E2 ubiquitin-conjugating enzyme]-L-cysteine + [acceptor protein]-L-lysine = [E2 ubiquitin-conjugating enzyme]-L-cysteine + N(6)-ubiquitinyl-[acceptor protein]-L-lysine.. It catalyses the reaction ATP + H2O = ADP + phosphate + H(+). The protein operates within protein modification; protein ubiquitination. Atypical E3 ubiquitin ligase that can catalyze ubiquitination of both proteins and lipids, and which is involved in various processes, such as lipid metabolism, angiogenesis and cell-autonomous immunity. Acts as a key immune sensor by catalyzing ubiquitination of the lipid A moiety of bacterial lipopolysaccharide (LPS) via its RZ-type zinc-finger: restricts the proliferation of cytosolic bacteria, such as Salmonella, by generating the bacterial ubiquitin coat through the ubiquitination of LPS. Ubiquitination of LPS triggers cell-autonomous immunity, such as antibacterial autophagy, leading to degradation of the microbial invader. Involved in lipid metabolism by regulating fat storage and lipid droplet formation; act by inhibiting the lipolytic process. Also regulates lipotoxicity by inhibiting desaturation of fatty acids. Also acts as an E3 ubiquitin-protein ligase via its RING-type zinc finger. Involved in the non-canonical Wnt signaling pathway in vascular development: acts by mediating ubiquitination and degradation of proteins downstream of rspo3, leading to inhibit the non-canonical Wnt signaling pathway and promoting vessel regression. Also has ATPase activity; ATPase activity is required for ubiquitination of LPS. In Danio rerio (Zebrafish), this protein is E3 ubiquitin-protein ligase rnf213-beta (rnf213b).